A 548-amino-acid chain; its full sequence is Rhotekin (548 aa).

The region spanning 10-85 (DLNMLYIRQM…LQRRKEAQVL (76 aa)) is the REM-1 domain. 2 positions are modified to phosphoserine: serine 22 and serine 93. The interval 83–103 (QVLGKTGRRPSDSVQPPERSP) is disordered. Asymmetric dimethylarginine is present on arginine 217. Serine 219 bears the Phosphoserine mark. In terms of domain architecture, PH spans 296-403 (QPTASGTLRV…WMEALWQLFL (108 aa)). Phosphoserine occurs at positions 504, 513, and 528. Positions 506–548 (DAVPADHSLGPSRSVAPLPPQRSPQSRGFYSKSQLSTWLQSPV) are disordered. Over residues 528–548 (SPQSRGFYSKSQLSTWLQSPV) the composition is skewed to polar residues.

As to quaternary structure, interacts via its C-terminal region with the TAX1BP3 PDZ domain. This interaction facilitates Rho-mediated activation of the c-Fos serum response element (SRE). Interacts with SEPT9. Specifically binds to GTP-bound RHOA, RHOB and RHOC and inhibits their GTPase activity.

Mediates Rho signaling to activate NF-kappa-B and may confer increased resistance to apoptosis to cells in gastric tumorigenesis. May play a novel role in the organization of septin structures. The protein is Rhotekin of Rattus norvegicus (Rat).